Here is an 84-residue protein sequence, read N- to C-terminus: Cell division topological specificity factor (84 aa).

It belongs to the MinE family.

Prevents the cell division inhibition by proteins MinC and MinD at internal division sites while permitting inhibition at polar sites. This ensures cell division at the proper site by restricting the formation of a division septum at the midpoint of the long axis of the cell. This is Cell division topological specificity factor from Pseudomonas entomophila (strain L48).